Reading from the N-terminus, the 226-residue chain is 2-C-methyl-D-erythritol 4-phosphate cytidylyltransferase (226 aa).

Belongs to the IspD/TarI cytidylyltransferase family. IspD subfamily.

The catalysed reaction is 2-C-methyl-D-erythritol 4-phosphate + CTP + H(+) = 4-CDP-2-C-methyl-D-erythritol + diphosphate. Its pathway is isoprenoid biosynthesis; isopentenyl diphosphate biosynthesis via DXP pathway; isopentenyl diphosphate from 1-deoxy-D-xylulose 5-phosphate: step 2/6. In terms of biological role, catalyzes the formation of 4-diphosphocytidyl-2-C-methyl-D-erythritol from CTP and 2-C-methyl-D-erythritol 4-phosphate (MEP). This is 2-C-methyl-D-erythritol 4-phosphate cytidylyltransferase from Parasynechococcus marenigrum (strain WH8102).